The sequence spans 279 residues: Proteasome subunit beta (279 aa).

Positions 1-53 (MAAAFDPSGRLPDLFTSAGTSSFSAFLSMAAPELLPGRRPLPPGTAADLTPHA) are cleaved as a propeptide — removed in mature form; by autocatalysis. Thr54 functions as the Nucleophile in the catalytic mechanism.

It belongs to the peptidase T1B family. The 20S proteasome core is composed of 14 alpha and 14 beta subunits that assemble into four stacked heptameric rings, resulting in a barrel-shaped structure. The two inner rings, each composed of seven catalytic beta subunits, are sandwiched by two outer rings, each composed of seven alpha subunits. The catalytic chamber with the active sites is on the inside of the barrel. Has a gated structure, the ends of the cylinder being occluded by the N-termini of the alpha-subunits. Is capped by the proteasome-associated ATPase, ARC.

Its subcellular location is the cytoplasm. The catalysed reaction is Cleavage of peptide bonds with very broad specificity.. The protein operates within protein degradation; proteasomal Pup-dependent pathway. With respect to regulation, the formation of the proteasomal ATPase ARC-20S proteasome complex, likely via the docking of the C-termini of ARC into the intersubunit pockets in the alpha-rings, may trigger opening of the gate for substrate entry. Interconversion between the open-gate and close-gate conformations leads to a dynamic regulation of the 20S proteasome proteolysis activity. Functionally, component of the proteasome core, a large protease complex with broad specificity involved in protein degradation. In Salinispora arenicola (strain CNS-205), this protein is Proteasome subunit beta.